The primary structure comprises 654 residues: tRNA 5-methylaminomethyl-2-thiouridine biosynthesis bifunctional protein MnmC (654 aa).

Positions 1–236 are tRNA (mnm(5)s(2)U34)-methyltransferase; that stretch reads MSTLLQHAQI…KWEVMHGVYT (236 aa). The tract at residues 262–654 is FAD-dependent cmnm(5)s(2)U34 oxidoreductase; the sequence is IGAGLAGSAT…FALRRLIRGK (393 aa).

In the N-terminal section; belongs to the methyltransferase superfamily. tRNA (mnm(5)s(2)U34)-methyltransferase family. This sequence in the C-terminal section; belongs to the DAO family. It depends on FAD as a cofactor.

Its subcellular location is the cytoplasm. It catalyses the reaction 5-aminomethyl-2-thiouridine(34) in tRNA + S-adenosyl-L-methionine = 5-methylaminomethyl-2-thiouridine(34) in tRNA + S-adenosyl-L-homocysteine + H(+). Catalyzes the last two steps in the biosynthesis of 5-methylaminomethyl-2-thiouridine (mnm(5)s(2)U) at the wobble position (U34) in tRNA. Catalyzes the FAD-dependent demodification of cmnm(5)s(2)U34 to nm(5)s(2)U34, followed by the transfer of a methyl group from S-adenosyl-L-methionine to nm(5)s(2)U34, to form mnm(5)s(2)U34. The chain is tRNA 5-methylaminomethyl-2-thiouridine biosynthesis bifunctional protein MnmC from Pseudomonas entomophila (strain L48).